The chain runs to 393 residues: ATP phosphoribosyltransferase regulatory subunit (393 aa).

It belongs to the class-II aminoacyl-tRNA synthetase family. HisZ subfamily. Heteromultimer composed of HisG and HisZ subunits.

The protein resides in the cytoplasm. It functions in the pathway amino-acid biosynthesis; L-histidine biosynthesis; L-histidine from 5-phospho-alpha-D-ribose 1-diphosphate: step 1/9. Its function is as follows. Required for the first step of histidine biosynthesis. May allow the feedback regulation of ATP phosphoribosyltransferase activity by histidine. The sequence is that of ATP phosphoribosyltransferase regulatory subunit from Marinobacter nauticus (strain ATCC 700491 / DSM 11845 / VT8) (Marinobacter aquaeolei).